Here is a 1012-residue protein sequence, read N- to C-terminus: MHLTADDCEALSRSTEGLSSLTQPLNQRRSRGDVNRGLQPTHRTRTQPGAQGRQKNIMDYFKVSQRQQAVAGRTKDISIKEEVLDPFFAEDDESSISSVMETSGDSSSFLENEYMGNSRKRPLSSTAPGRLQIENDLWGEPEKKAVVVHPEHSQIKQELDDEIEIEPVPDSHYGLLGTRNWEVPQGSIEDLPDEVLRSIFAFLPVTDLYQSLSLVCRRWRIIVGDPWFIPWKKLYHQYLVKEDMALRRVEQVLQDFAITGQHKECILGLIRCVSTIPTSRNVDPSAVLQCLKGHHLFSRAEVCITNKLPHLQSKTGPEYMWAIITAMVLFSDGVRDIQRLMACLQRPCSSLSIVDVTETLYCIATLLYAMREKNINITNRIHYNIFYCLYLMENASVTAPQVVEEETPSSRCRQDFWSSSLSEVKLTHEQQRILNHKIERGQIVKIMAFAGTGKTSTLVKYAEKFADLSFLYVTFNKAVAERGRLVFPRNVTCKTFHSLAFGSVGKLYKEKGKLNFSKLSAYSVSFLIQNREGQSIFIRGKTVSQTLENFFASSDEEICEEHTPVWFKNTHGERKLVTPEEKRINVEEAKEIWRNMKKLDGDVERKYKITCDGYLKLWQLSKPQLSGYDAIFVDEAQDCTPAIVDIVLSQTCGVILVGDPHQQIYSFRGAVNTLYTVPHTHIYYLTQSFRFGPEIAYVGATILDVCKGIRNKTLVGGNQEGDVRGSMEGKITMLSRSNFTVFEDAAKLAGRERQIKIHIIGGLVRFGLSKIYDIWKLSQPADEREKANLVINDSFIKRWEENEGFIGLKDYATRVDDKELEMKIRIVEKFKERIPELVQKIESSHVLQEAMADYLIGTVHQAKGLEFDTVLIADDFVDVPCARDNNQRRPQFIIGMCPEDEWNLLYVAVTRAKKCLLMSQSLEHLLALAGEHFLRVELMGEAVKTGVACSTQQCTQTLQSGIRLVVKKLPLIHSNGSRDMGGYLCYSCVQKRFGSMTPLAFLPALQEEPIVL.

The tract at residues 1–54 (MHLTADDCEALSRSTEGLSSLTQPLNQRRSRGDVNRGLQPTHRTRTQPGAQGRQ) is disordered. Residues 12–27 (SRSTEGLSSLTQPLNQ) show a composition bias toward polar residues. An F-box domain is found at 185–234 (QGSIEDLPDEVLRSIFAFLPVTDLYQSLSLVCRRWRIIVGDPWFIPWKKL). Residues 427-692 (THEQQRILNH…YYLTQSFRFG (266 aa)) enclose the UvrD-like helicase ATP-binding domain. Position 448 to 455 (448 to 455 (AFAGTGKT)) interacts with ATP.

The protein belongs to the helicase family. UvrD subfamily. As to quaternary structure, part of the SCF (SKP1-CUL1-F-box) E3 ubiquitin-protein ligase complex SCF(FBH1).

The protein resides in the nucleus. It is found in the chromosome. It carries out the reaction Couples ATP hydrolysis with the unwinding of duplex DNA by translocating in the 3'-5' direction.. The enzyme catalyses ATP + H2O = ADP + phosphate + H(+). It functions in the pathway protein modification; protein ubiquitination. In terms of biological role, 3'-5' DNA helicase and substrate-recognition component of the SCF(FBH1) E3 ubiquitin ligase complex that plays a key role in response to stalled/damaged replication forks. Involved in genome maintenance by acting as an anti-recombinogenic helicase and preventing extensive strand exchange during homologous recombination: promotes RAD51 filament dissolution from stalled forks, thereby inhibiting homologous recombination and preventing excessive recombination. Also promotes cell death and DNA double-strand breakage in response to replication stress: promotes the endonucleolytic DNA cleavage following prolonged replication stress via its helicase activity, possibly to eliminate cells with excessive replication stress. The protein is F-box DNA helicase 1 of Gallus gallus (Chicken).